The primary structure comprises 364 residues: 3-dehydroquinate synthase (364 aa).

NAD(+) is bound by residues Asp-75–Lys-80, Gly-109–Asp-113, Thr-133–Thr-134, Lys-146, Lys-155, and Thr-173–Thr-176. The Zn(2+) site is built by Glu-188, His-251, and His-268.

Belongs to the sugar phosphate cyclases superfamily. Dehydroquinate synthase family. Co(2+) is required as a cofactor. The cofactor is Zn(2+). It depends on NAD(+) as a cofactor.

Its subcellular location is the cytoplasm. It catalyses the reaction 7-phospho-2-dehydro-3-deoxy-D-arabino-heptonate = 3-dehydroquinate + phosphate. It functions in the pathway metabolic intermediate biosynthesis; chorismate biosynthesis; chorismate from D-erythrose 4-phosphate and phosphoenolpyruvate: step 2/7. Catalyzes the conversion of 3-deoxy-D-arabino-heptulosonate 7-phosphate (DAHP) to dehydroquinate (DHQ). In Dechloromonas aromatica (strain RCB), this protein is 3-dehydroquinate synthase.